The following is a 343-amino-acid chain: Ribosomal RNA small subunit methyltransferase C (343 aa).

This sequence belongs to the methyltransferase superfamily. RsmC family. Monomer.

It is found in the cytoplasm. The catalysed reaction is guanosine(1207) in 16S rRNA + S-adenosyl-L-methionine = N(2)-methylguanosine(1207) in 16S rRNA + S-adenosyl-L-homocysteine + H(+). Specifically methylates the guanine in position 1207 of 16S rRNA in the 30S particle. In Escherichia coli (strain K12 / DH10B), this protein is Ribosomal RNA small subunit methyltransferase C.